The following is a 281-amino-acid chain: 2-dehydro-3-deoxyphosphooctonate aldolase (281 aa).

It belongs to the KdsA family.

It is found in the cytoplasm. The enzyme catalyses D-arabinose 5-phosphate + phosphoenolpyruvate + H2O = 3-deoxy-alpha-D-manno-2-octulosonate-8-phosphate + phosphate. Its pathway is carbohydrate biosynthesis; 3-deoxy-D-manno-octulosonate biosynthesis; 3-deoxy-D-manno-octulosonate from D-ribulose 5-phosphate: step 2/3. It participates in bacterial outer membrane biogenesis; lipopolysaccharide biosynthesis. In Acidithiobacillus ferrooxidans (strain ATCC 23270 / DSM 14882 / CIP 104768 / NCIMB 8455) (Ferrobacillus ferrooxidans (strain ATCC 23270)), this protein is 2-dehydro-3-deoxyphosphooctonate aldolase.